A 224-amino-acid chain; its full sequence is Large ribosomal subunit protein bL25 (224 aa).

The interval 195–224 (TVEEVDEAAEVDAADVPATEQGTDESKDGE) is disordered. Positions 197–207 (EEVDEAAEVDA) are enriched in acidic residues.

It belongs to the bacterial ribosomal protein bL25 family. CTC subfamily. In terms of assembly, part of the 50S ribosomal subunit; part of the 5S rRNA/L5/L18/L25 subcomplex. Contacts the 5S rRNA. Binds to the 5S rRNA independently of L5 and L18.

Its function is as follows. This is one of the proteins that binds to the 5S RNA in the ribosome where it forms part of the central protuberance. This Psychrobacter cryohalolentis (strain ATCC BAA-1226 / DSM 17306 / VKM B-2378 / K5) protein is Large ribosomal subunit protein bL25.